A 471-amino-acid polypeptide reads, in one-letter code: MTLLQKEYNDVAYISGPLLFVNAASDLPNGAIVNIKDGNGKLRGGRVISVSDQNAVIQVFEETRGLDLATASVSLVEDVARLGVSKEMIGRRFDGLGRPIDGLPAVVAEQRLSVDGQPMNPAARAKPEEFIQTGISTIDVQTSLIRGQKLPIFSGSGLPHNELAAQIARQAKVPGHEGDFAVVFAAMGLTQREVSFFTQEFERTGALARSVLFLNKADDPAVERLLTPRMALTTAEYLAFEHGYHVLVILTDLTNYCEALREIGGAREEIPGRRGFPGYMYTDLASLYERAGVVEGKPGSVTQVPILSMPDDDITHPIPDLTGYITEGQIVVDRTLNSKGVFPPINPLPSLSRLQGNGIGKGKTRADHKNVADQLFAAYANGLDLRKLVAITGEDALTETDKLYLKFSDDFENYFIGQGDQDRSIDDSLTVAWGILSKLPQSQLTRLSKDSIDKYYGTKMDEMWKGGRSSI.

The protein belongs to the ATPase alpha/beta chains family.

Functionally, produces ATP from ADP in the presence of a proton gradient across the membrane. The V-type beta chain is a regulatory subunit. In Deinococcus radiodurans (strain ATCC 13939 / DSM 20539 / JCM 16871 / CCUG 27074 / LMG 4051 / NBRC 15346 / NCIMB 9279 / VKM B-1422 / R1), this protein is V-type ATP synthase beta chain (atpB).